The sequence spans 591 residues: Frizzled and smoothened-like protein F (591 aa).

The signal sequence occupies residues 1–17 (MKILIIFIIFIISYISG). The Extracellular portion of the chain corresponds to 18 to 244 (FEIPKGFGIG…KWDQLLTMSK (227 aa)). Residues 30-177 (IPDAECLNYI…GTFAVPCSDP (148 aa)) form the FZ domain. Disulfide bonds link Cys35–Cys105, Cys48–Cys98, and Cys123–Cys174. 4 N-linked (GlcNAc...) asparagine glycosylation sites follow: Asn167, Asn187, Asn202, and Asn230. Residues 245 to 265 (ILSTISFILSLYNVLTFGIIN) traverse the membrane as a helical segment. Residues 266-275 (KKVSDPHKCT) are Cytoplasmic-facing. The chain crosses the membrane as a helical span at residues 276-296 (CFFSGSIALVNLCDIITYGIG). The Extracellular segment spans residues 297–321 (YEELLCPEPGRSAKQQLDPVCGLTG). Residues 322–342 (AFFHLGITYCVLWSMTMGLVL) form a helical membrane-spanning segment. Topologically, residues 343-353 (YCSVKRQKWFK) are cytoplasmic. Residues 354 to 374 (FNYFLIGNTTFTITTVVIAAA) traverse the membrane as a helical segment. The Extracellular portion of the chain corresponds to 375–397 (TSKFEAGLGSIECWIRDRWYAIS). The helical transmembrane segment at 398–418 (LFWIPCGIALLIGSFCIIAVI) threads the bilayer. The Cytoplasmic segment spans residues 419–442 (HEVYKTSKKSISNRNDLLQRELKP). Residues 443 to 463 (LLIVIFISGSFLYLFIFFFDI) form a helical membrane-spanning segment. At 464–495 (ERKFGGYRSAVEDYVLCLLNGSQEECFTTGPS) the chain is on the extracellular side. Asn483 carries N-linked (GlcNAc...) asparagine glycosylation. Residues 496–516 (YVPYFLFYLVIRWFGIIFFLF) form a helical membrane-spanning segment. Residues 517-591 (YGTSNIARKI…AVELESIKIN (75 aa)) are Cytoplasmic-facing. Over residues 538–571 (SSISPKSTPKSSPKNSDSKINSNSTNNNNMILND) the composition is skewed to low complexity. The disordered stretch occupies residues 538–573 (SSISPKSTPKSSPKNSDSKINSNSTNNNNMILNDNN).

Belongs to the G-protein coupled receptor Fz/Smo family.

It localises to the membrane. The sequence is that of Frizzled and smoothened-like protein F (fslF) from Dictyostelium discoideum (Social amoeba).